Consider the following 391-residue polypeptide: Ferrochelatase (391 aa).

His196 and Glu281 together coordinate Fe cation.

Belongs to the ferrochelatase family.

The protein localises to the cytoplasm. It catalyses the reaction heme b + 2 H(+) = protoporphyrin IX + Fe(2+). Its pathway is porphyrin-containing compound metabolism; protoheme biosynthesis; protoheme from protoporphyrin-IX: step 1/1. Functionally, catalyzes the ferrous insertion into protoporphyrin IX. This is Ferrochelatase from Prochlorococcus marinus (strain MIT 9515).